We begin with the raw amino-acid sequence, 288 residues long: Rhythmically expressed gene 5 protein (288 aa).

In terms of tissue distribution, expressed in head, but not in the body. Expression levels oscillate with the circadian rhythm.

Its function is as follows. Involved in the generation of biological rhythms (Potential). In the head, oscillates in abundance with a daily peak during early night, even under constant darkness. Oscillation is dependent on period (per) function. The protein is Rhythmically expressed gene 5 protein (Reg-5) of Drosophila melanogaster (Fruit fly).